The chain runs to 62 residues: Large ribosomal subunit protein uL29 (62 aa).

This sequence belongs to the universal ribosomal protein uL29 family.

The protein is Large ribosomal subunit protein uL29 of Laribacter hongkongensis (strain HLHK9).